Reading from the N-terminus, the 142-residue chain is Large ribosomal subunit protein uL11 (142 aa).

This sequence belongs to the universal ribosomal protein uL11 family. Part of the ribosomal stalk of the 50S ribosomal subunit. Interacts with L10 and the large rRNA to form the base of the stalk. L10 forms an elongated spine to which L12 dimers bind in a sequential fashion forming a multimeric L10(L12)X complex. Post-translationally, one or more lysine residues are methylated.

In terms of biological role, forms part of the ribosomal stalk which helps the ribosome interact with GTP-bound translation factors. The protein is Large ribosomal subunit protein uL11 of Bradyrhizobium sp. (strain BTAi1 / ATCC BAA-1182).